The following is an 810-amino-acid chain: Janus kinase and microtubule-interacting protein 2 (810 aa).

Coiled-coil stretches lie at residues 13–102, 148–178, and 207–244; these read EALI…EMSR, ERLKLLQEIADLKTAKKQVDEALSNMIQADK, and RRLMDEIKAKDRIIFSLEKELETQTGYVQKLQLQKEAL. Residues 261–274 are compositionally biased toward basic and acidic residues; that stretch reads PKREIPGRAGDGSE. 2 disordered regions span residues 261–280 and 437–465; these read PKREIPGRAGDGSEHCSSPD and YDEDSMDSETSSMASFRTDRTPATPDDDL. Residues 280 to 419 are a coiled coil; it reads DLRRNQKRIA…REKLIRRRKH (140 aa). Coiled coils occupy residues 468-597 and 664-808; these read SLAA…RERR and EKWI…SNRK.

It belongs to the JAKMIP family. In terms of tissue distribution, highly expressed in brain, moderately expressed in thymus, spleen and lung, and weakly expressed in kidney, liver and peripheral blood lymphocytes. Also expressed in adrenal and pituitary glands, as well as testis.

The protein resides in the golgi apparatus. The sequence is that of Janus kinase and microtubule-interacting protein 2 (JAKMIP2) from Homo sapiens (Human).